The primary structure comprises 483 residues: Cobyric acid synthase (483 aa).

A GATase cobBQ-type domain is found at 251–438 (ALIVAVPMLP…LHGVFSADRF (188 aa)). The Nucleophile role is filled by Cys333. Residue His430 is part of the active site.

The protein belongs to the CobB/CobQ family. CobQ subfamily.

Its pathway is cofactor biosynthesis; adenosylcobalamin biosynthesis. Catalyzes amidations at positions B, D, E, and G on adenosylcobyrinic A,C-diamide. NH(2) groups are provided by glutamine, and one molecule of ATP is hydrogenolyzed for each amidation. This chain is Cobyric acid synthase, found in Brucella melitensis biotype 2 (strain ATCC 23457).